The following is a 114-amino-acid chain: Cytochrome c2 (114 aa).

Gln-1 carries the pyrrolidone carboxylic acid modification. Residues Cys-13, Cys-16, His-17, and Met-93 each coordinate heme c.

Belongs to the cytochrome c family. Binds 1 heme c group covalently per subunit.

Functionally, cytochrome c2 is found mainly in purple, non-sulfur, photosynthetic bacteria where it functions as the electron donor to the oxidized bacteriochlorophyll in the photophosphorylation pathway. However, it may also have a role in the respiratory chain and is found in some non-photosynthetic bacteria. The chain is Cytochrome c2 (cycA) from Rhodopseudomonas palustris.